Here is a 354-residue protein sequence, read N- to C-terminus: Green-sensitive opsin-3 (354 aa).

Topologically, residues 1–39 (MSGLNGFEGDNFYIPMSNRTGLVRDPFVYEQYYLAEPWQ) are extracellular. An N-linked (GlcNAc...) asparagine glycan is attached at Asn18. The chain crosses the membrane as a helical span at residues 40 to 64 (FKLLACYMFFLICLGLPINGFTLFV). Over 65-76 (TAQHKKLQQPLN) the chain is Cytoplasmic. A helical transmembrane segment spans residues 77–102 (FILVNLAVAGMIMVCFGFTITISSAV). At 103-116 (NGYFYFGPTACAIE) the chain is on the extracellular side. An intrachain disulfide couples Cys113 to Cys190. A helical transmembrane segment spans residues 117–136 (GFMATLGGEVALWSLVVLAI). At 137-155 (ERYIVVCKPMGSFKFSASH) the chain is on the cytoplasmic side. Residues 156–179 (ALGGIGFTWFMAMTCAAPPLVGWS) traverse the membrane as a helical segment. Residues 180–205 (RYIPEGLQCSCGPDYYTLNPKYNNES) are Extracellular-facing. Residue Asn203 is glycosylated (N-linked (GlcNAc...) asparagine). A helical transmembrane segment spans residues 206-233 (YVIYMFVVHFIVPVTVIFFTYGRLVCTV). At 234 to 255 (KSAAAAQQDSASTQKAEKEVTR) the chain is on the cytoplasmic side. A helical membrane pass occupies residues 256–279 (MVILMVVGFLVAWTPYATVAAWIF). Residues 280–287 (FNKGAAFT) are Extracellular-facing. A helical membrane pass occupies residues 288-312 (AQFMAVPAFFSKSSALFNPIIYVLL). Lys299 carries the post-translational modification N6-(retinylidene)lysine. Topologically, residues 313–354 (NKQFRNCMLTTLFCGKNPLGDEESSTVSTKTEVSTVSSVSPA) are cytoplasmic.

Belongs to the G-protein coupled receptor 1 family. Opsin subfamily. In terms of tissue distribution, the color pigments are found in the cone photoreceptor cells.

It is found in the membrane. Its function is as follows. Visual pigments are the light-absorbing molecules that mediate vision. They consist of an apoprotein, opsin, covalently linked to cis-retinal. The polypeptide is Green-sensitive opsin-3 (RH11) (Psalidodon fasciatus (Banded astyanax)).